A 1072-amino-acid chain; its full sequence is DNA-directed RNA polymerase subunit beta (1072 aa).

This sequence belongs to the RNA polymerase beta chain family. As to quaternary structure, in plastids the minimal PEP RNA polymerase catalytic core is composed of four subunits: alpha, beta, beta', and beta''. When a (nuclear-encoded) sigma factor is associated with the core the holoenzyme is formed, which can initiate transcription.

Its subcellular location is the plastid. It localises to the chloroplast. The enzyme catalyses RNA(n) + a ribonucleoside 5'-triphosphate = RNA(n+1) + diphosphate. DNA-dependent RNA polymerase catalyzes the transcription of DNA into RNA using the four ribonucleoside triphosphates as substrates. In Arabis hirsuta (Hairy rock-cress), this protein is DNA-directed RNA polymerase subunit beta.